Reading from the N-terminus, the 518-residue chain is uncharacterized protein (518 aa).

Belongs to the MG032/MG096/MG288 family.

This is an uncharacterized protein from Mycoplasma pneumoniae (strain ATCC 29342 / M129 / Subtype 1) (Mycoplasmoides pneumoniae).